Consider the following 414-residue polypeptide: MIDLRALEKDFDTIATRLQTKGVEEKVLAELKELFEEYKKEKTILQELQTKQNSLSKMFGQYKREGKDINELKNELEINKGKIAAHQEVVRDLEEKLKNIALTIPNPPDPDVPVGENEEDNVVLKTVLEPKGFDFEPKEHWELGEKLGWIDFERGVKLAKSRFSVLKKEAARLERALINFMLDHNKEYGFEEVCVPFMANSATLLGTGQLPKFEEDLFKICDEDLYMIPTAEVPLTNLYRDEIIKDLEDPIKLTAYTPCFRKEAGSGGRDVRGMIRQHQFDKVELVAITRPEESDKVFDEMVKCASSLLAKLGLPHRHVMLCTGDLGFSAAKTIDLEVWLPGQGKYREISSISNTRDFQARRAQIRFKDGKKNRLVHTLNGSSLAVGRTLIAIMENYQQKDGSIAIPKVLESYL.

An L-serine-binding site is contributed by 230–232 (TAE). An ATP-binding site is contributed by 261–263 (RKE). An L-serine-binding site is contributed by Glu-284. 348–351 (EISS) contacts ATP. Ser-382 is a binding site for L-serine.

This sequence belongs to the class-II aminoacyl-tRNA synthetase family. Type-1 seryl-tRNA synthetase subfamily. As to quaternary structure, homodimer. The tRNA molecule binds across the dimer.

The protein localises to the cytoplasm. It carries out the reaction tRNA(Ser) + L-serine + ATP = L-seryl-tRNA(Ser) + AMP + diphosphate + H(+). It catalyses the reaction tRNA(Sec) + L-serine + ATP = L-seryl-tRNA(Sec) + AMP + diphosphate + H(+). The protein operates within aminoacyl-tRNA biosynthesis; selenocysteinyl-tRNA(Sec) biosynthesis; L-seryl-tRNA(Sec) from L-serine and tRNA(Sec): step 1/1. In terms of biological role, catalyzes the attachment of serine to tRNA(Ser). Is also able to aminoacylate tRNA(Sec) with serine, to form the misacylated tRNA L-seryl-tRNA(Sec), which will be further converted into selenocysteinyl-tRNA(Sec). This chain is Serine--tRNA ligase, found in Nitratiruptor sp. (strain SB155-2).